Here is a 344-residue protein sequence, read N- to C-terminus: rRNA 2'-O-methyltransferase fibrillarin (344 aa).

A disordered region spans residues 1–113 (MGKPGFSPRG…GFKGGKTVTI (113 aa)). The segment covering 8 to 107 (PRGGGGGGGG…RGGGAGGFKG (100 aa)) has biased composition (gly residues). An asymmetric dimethylarginine mark is found at Arg9, Arg23, Arg25, Arg40, Arg42, Arg48, Arg51, Arg58, Arg63, Arg71, Arg77, Arg83, Arg88, Arg93, and Arg98. Residues 197-198 (TT), 216-217 (EF), 241-242 (DA), and 261-264 (DVAQ) each bind S-adenosyl-L-methionine.

Belongs to the methyltransferase superfamily. Fibrillarin family. In terms of assembly, component of box C/D small nucleolar ribonucleoprotein (snoRNP) particles. It is associated with the U3, U8 and U13 small nuclear RNAs. Post-translationally, by homology to other fibrillarins, some or all of the N-terminal domain arginines are modified to asymmetric dimethylarginine (DMA).

Its subcellular location is the nucleus. The protein localises to the nucleolus. The enzyme catalyses L-glutaminyl-[histone H2A] + S-adenosyl-L-methionine = N(5)-methyl-L-glutaminyl-[histone H2A] + S-adenosyl-L-homocysteine + H(+). S-adenosyl-L-methionine-dependent methyltransferase that has the ability to methylate both RNAs and proteins. Involved in pre-rRNA processing. Utilizes the methyl donor S-adenosyl-L-methionine to catalyze the site-specific 2'-hydroxyl methylation of ribose moieties in pre-ribosomal RNA. Site specificity is provided by a guide RNA that base pairs with the substrate. Methylation occurs at a characteristic distance from the sequence involved in base pairing with the guide RNA. Also acts as a protein methyltransferase by mediating methylation of 'Gln-105' of histone H2A (H2AQ105me), a modification that impairs binding of the FACT complex and is specifically present at 35S ribosomal DNA locus. The protein is rRNA 2'-O-methyltransferase fibrillarin of Drosophila melanogaster (Fruit fly).